A 240-amino-acid chain; its full sequence is Thiamine-phosphate synthase (240 aa).

4-amino-2-methyl-5-(diphosphooxymethyl)pyrimidine is bound by residues 63-67 (QYREK) and Asn94. Asp95 and Asp114 together coordinate Mg(2+). Thr133 provides a ligand contact to 4-amino-2-methyl-5-(diphosphooxymethyl)pyrimidine. 159–161 (TFT) serves as a coordination point for 2-[(2R,5Z)-2-carboxy-4-methylthiazol-5(2H)-ylidene]ethyl phosphate. Lys162 serves as a coordination point for 4-amino-2-methyl-5-(diphosphooxymethyl)pyrimidine. Residues Gly190 and 210 to 211 (IS) contribute to the 2-[(2R,5Z)-2-carboxy-4-methylthiazol-5(2H)-ylidene]ethyl phosphate site.

This sequence belongs to the thiamine-phosphate synthase family. Mg(2+) serves as cofactor.

The catalysed reaction is 2-[(2R,5Z)-2-carboxy-4-methylthiazol-5(2H)-ylidene]ethyl phosphate + 4-amino-2-methyl-5-(diphosphooxymethyl)pyrimidine + 2 H(+) = thiamine phosphate + CO2 + diphosphate. It catalyses the reaction 2-(2-carboxy-4-methylthiazol-5-yl)ethyl phosphate + 4-amino-2-methyl-5-(diphosphooxymethyl)pyrimidine + 2 H(+) = thiamine phosphate + CO2 + diphosphate. It carries out the reaction 4-methyl-5-(2-phosphooxyethyl)-thiazole + 4-amino-2-methyl-5-(diphosphooxymethyl)pyrimidine + H(+) = thiamine phosphate + diphosphate. It functions in the pathway cofactor biosynthesis; thiamine diphosphate biosynthesis; thiamine phosphate from 4-amino-2-methyl-5-diphosphomethylpyrimidine and 4-methyl-5-(2-phosphoethyl)-thiazole: step 1/1. Condenses 4-methyl-5-(beta-hydroxyethyl)thiazole monophosphate (THZ-P) and 2-methyl-4-amino-5-hydroxymethyl pyrimidine pyrophosphate (HMP-PP) to form thiamine monophosphate (TMP). This Methanosarcina mazei (strain ATCC BAA-159 / DSM 3647 / Goe1 / Go1 / JCM 11833 / OCM 88) (Methanosarcina frisia) protein is Thiamine-phosphate synthase.